A 701-amino-acid chain; its full sequence is Glycine--tRNA ligase beta subunit (701 aa).

The protein belongs to the class-II aminoacyl-tRNA synthetase family. Tetramer of two alpha and two beta subunits.

The protein resides in the cytoplasm. It catalyses the reaction tRNA(Gly) + glycine + ATP = glycyl-tRNA(Gly) + AMP + diphosphate. This is Glycine--tRNA ligase beta subunit from Anaeromyxobacter dehalogenans (strain 2CP-1 / ATCC BAA-258).